Reading from the N-terminus, the 240-residue chain is MATPHINAPEGAFADVVLMPGDPLRAKYIAETFLEDAVQVTDVRNMFGYTGTYKGRRISVMGHGMGIPSCSIYAKELITEYGVKKIIRVGSCGAVRQDVKVRDVIIGSGACTDSKVNRIRFRDNDFAAISDFDMTLAAVQAAKQKGIAARVGNLFSADLFYTPDVEMFDVMEKYGILGVEMEAAGIYAVAAEYGAKALAICTVSDHIRTGEQTSSEERQLTFNDMITIALESVLIGDKAE.

Residue H5 participates in a purine D-ribonucleoside binding. Phosphate contacts are provided by residues G21, R25, R44, and 88 to 91 (RVGS). Residues 180 to 182 (EME) and 204 to 205 (SD) contribute to the a purine D-ribonucleoside site. The active-site Proton donor is D205.

It belongs to the PNP/UDP phosphorylase family. In terms of assembly, homohexamer; trimer of homodimers.

It catalyses the reaction a purine D-ribonucleoside + phosphate = a purine nucleobase + alpha-D-ribose 1-phosphate. The catalysed reaction is a purine 2'-deoxy-D-ribonucleoside + phosphate = a purine nucleobase + 2-deoxy-alpha-D-ribose 1-phosphate. In terms of biological role, catalyzes the reversible phosphorolytic breakdown of the N-glycosidic bond in the beta-(deoxy)ribonucleoside molecules, with the formation of the corresponding free purine bases and pentose-1-phosphate. In Actinobacillus pleuropneumoniae serotype 5b (strain L20), this protein is Purine nucleoside phosphorylase DeoD-type.